The chain runs to 120 residues: Seripauperin-10 (120 aa).

A signal peptide spans 1–20 (MVKLTSIAAGVAAIAATASA).

The protein belongs to the SRP1/TIP1 family. Seripauperin subfamily.

This chain is Seripauperin-10 (PAU10), found in Saccharomyces cerevisiae (strain ATCC 204508 / S288c) (Baker's yeast).